The sequence spans 267 residues: Malonyl-[acyl-carrier protein] O-methyltransferase (267 aa).

Belongs to the methyltransferase superfamily.

It catalyses the reaction malonyl-[ACP] + S-adenosyl-L-methionine = malonyl-[ACP] methyl ester + S-adenosyl-L-homocysteine. It participates in cofactor biosynthesis; biotin biosynthesis. Its function is as follows. Converts the free carboxyl group of a malonyl-thioester to its methyl ester by transfer of a methyl group from S-adenosyl-L-methionine (SAM). It allows to synthesize pimeloyl-ACP via the fatty acid synthetic pathway. The chain is Malonyl-[acyl-carrier protein] O-methyltransferase from Yersinia pestis.